The primary structure comprises 189 residues: FUN14 domain-containing protein 2 (189 aa).

Over 1-80 (METSAPRAGS…GQESGPSAEK (80 aa)) the chain is Cytoplasmic. Ser-10 and Ser-53 each carry phosphoserine. The helical transmembrane segment at 81 to 101 (YSVATQLFIGGVTGWCTGFIF) threads the bilayer. Residues 102–107 (QKVGKL) are Mitochondrial intermembrane-facing. The chain crosses the membrane as a helical span at residues 108-128 (AATAVGGGFFLLQLANHTGYI). Residues 129-164 (KVDWQRVEKDMKKAKEQLKIRKSNQIPTEVRSKAEE) are Cytoplasmic-facing. The residue at position 151 (Ser-151) is a Phosphoserine. Residues 165–185 (VVSFVKKNVLVTGGFFGGFLL) traverse the membrane as a helical segment. Over 186–189 (GMAS) the chain is Mitochondrial intermembrane.

The protein belongs to the FUN14 family. Highly expressed in platelets (at protein level).

It localises to the mitochondrion outer membrane. Its subcellular location is the nucleus. In terms of biological role, binds directly and specifically 1,2-Diacyl-sn-glycero-3-phospho-(1'-myo-inositol-3',4',5'-bisphosphate) (PIP3) leading to the recruitment of PIP3 to mitochondria and may play a role in the regulation of the platelet activation via AKT/GSK3B/cGMP signaling pathways. May act as transcription factor that regulates SREBP1 (isoform SREBP-1C) expression in order to modulate triglyceride (TG) homeostasis in hepatocytes. This chain is FUN14 domain-containing protein 2, found in Homo sapiens (Human).